Consider the following 533-residue polypeptide: Retinoid isomerohydrolase (533 aa).

Position 2 is an N-acetylserine (Ser2). Thr101 and Thr105 each carry phosphothreonine. A lipid anchor (S-palmitoyl cysteine; in membrane form) is attached at Cys112. An N6-acetyllysine modification is found at Lys113. Ser117 carries the phosphoserine modification. His180 is a Fe cation binding site. A lipid anchor (S-palmitoyl cysteine; in membrane form) is attached at Cys231. The Fe cation site is built by His241 and His313. Residues Cys329 and Cys330 are each lipidated (S-palmitoyl cysteine; in membrane form). His527 serves as a coordination point for Fe cation.

This sequence belongs to the carotenoid oxygenase family. As to quaternary structure, interacts with MYO7A; this mediates light-dependent intracellular transport of RPE65. Fe(2+) serves as cofactor. Palmitoylation by LRAT regulates ligand binding specificity; the palmitoylated form (membrane form) specifically binds all-trans-retinyl-palmitate, while the soluble unpalmitoylated form binds all-trans-retinol (vitamin A). As to expression, retinal pigment epithelium specific.

The protein resides in the cytoplasm. The protein localises to the cell membrane. Its subcellular location is the microsome membrane. It carries out the reaction an all-trans-retinyl ester + H2O = 11-cis-retinol + a fatty acid + H(+). It catalyses the reaction lutein = (3R,3'S)-zeaxanthin. The catalysed reaction is all-trans-retinyl hexadecanoate + H2O = 11-cis-retinol + hexadecanoate + H(+). Functionally, critical isomerohydrolase in the retinoid cycle involved in regeneration of 11-cis-retinal, the chromophore of rod and cone opsins. Catalyzes the cleavage and isomerization of all-trans-retinyl fatty acid esters to 11-cis-retinol which is further oxidized by 11-cis retinol dehydrogenase to 11-cis-retinal for use as visual chromophore. Essential for the production of 11-cis retinal for both rod and cone photoreceptors. Also capable of catalyzing the isomerization of lutein to meso-zeaxanthin an eye-specific carotenoid. The soluble form binds vitamin A (all-trans-retinol), making it available for LRAT processing to all-trans-retinyl ester. The membrane form, palmitoylated by LRAT, binds all-trans-retinyl esters, making them available for IMH (isomerohydrolase) processing to all-cis-retinol. The soluble form is regenerated by transferring its palmitoyl groups onto 11-cis-retinol, a reaction catalyzed by LRAT. This is Retinoid isomerohydrolase (RPE65) from Canis lupus familiaris (Dog).